The following is a 122-amino-acid chain: uncharacterized protein (122 aa).

Disordered regions lie at residues 1–30 and 96–122; these read MGRE…DQPE and FKSC…DAMG.

This is an uncharacterized protein from Homo sapiens (Human).